A 151-amino-acid chain; its full sequence is Ribosome maturation factor RimP (151 aa).

The protein belongs to the RimP family.

The protein resides in the cytoplasm. Functionally, required for maturation of 30S ribosomal subunits. The sequence is that of Ribosome maturation factor RimP from Synechocystis sp. (strain ATCC 27184 / PCC 6803 / Kazusa).